The primary structure comprises 123 residues: Large ribosomal subunit protein bL12 (123 aa).

Belongs to the bacterial ribosomal protein bL12 family. As to quaternary structure, homodimer. Part of the ribosomal stalk of the 50S ribosomal subunit. Forms a multimeric L10(L12)X complex, where L10 forms an elongated spine to which 2 to 4 L12 dimers bind in a sequential fashion. Binds GTP-bound translation factors.

Forms part of the ribosomal stalk which helps the ribosome interact with GTP-bound translation factors. Is thus essential for accurate translation. The polypeptide is Large ribosomal subunit protein bL12 (Cytophaga hutchinsonii (strain ATCC 33406 / DSM 1761 / CIP 103989 / NBRC 15051 / NCIMB 9469 / D465)).